The primary structure comprises 181 residues: MKNVTDSFISLSSAEGFGLNTNILETNIINLSVVLGVLIYFGKGVLSNLLDNRKQKISSTIQSSEELCKGAANQLEQARARLREVERRVREIRVNGYSQIQQEKNDLINVASINLKQLENLKNETIHLEQERVIELVQKQISYQAVQRALGTLNSRLNSELHLRTIEHNIDLLLAMKNITD.

The helical transmembrane segment at 28–50 threads the bilayer; the sequence is IINLSVVLGVLIYFGKGVLSNLL.

The protein belongs to the ATPase B chain family. F-type ATPases have 2 components, F(1) - the catalytic core - and F(0) - the membrane proton channel. F(1) has five subunits: alpha(3), beta(3), gamma(1), delta(1), epsilon(1). F(0) has four main subunits: a(1), b(1), b'(1) and c(10-14). The alpha and beta chains form an alternating ring which encloses part of the gamma chain. F(1) is attached to F(0) by a central stalk formed by the gamma and epsilon chains, while a peripheral stalk is formed by the delta, b and b' chains.

The protein localises to the plastid. Its subcellular location is the chloroplast thylakoid membrane. In terms of biological role, f(1)F(0) ATP synthase produces ATP from ADP in the presence of a proton or sodium gradient. F-type ATPases consist of two structural domains, F(1) containing the extramembraneous catalytic core and F(0) containing the membrane proton channel, linked together by a central stalk and a peripheral stalk. During catalysis, ATP synthesis in the catalytic domain of F(1) is coupled via a rotary mechanism of the central stalk subunits to proton translocation. Component of the F(0) channel, it forms part of the peripheral stalk, linking F(1) to F(0). The sequence is that of ATP synthase subunit b, chloroplastic from Cryptomeria japonica (Japanese cedar).